Here is a 21-residue protein sequence, read N- to C-terminus: Venom peptide Ocy4 (21 aa).

As to expression, expressed by the venom gland.

It is found in the secreted. This chain is Venom peptide Ocy4, found in Opisthacanthus cayaporum (South American scorpion).